The sequence spans 306 residues: Methionyl-tRNA formyltransferase (306 aa).

110–113 (SLLP) serves as a coordination point for (6S)-5,6,7,8-tetrahydrofolate.

Belongs to the Fmt family.

The catalysed reaction is L-methionyl-tRNA(fMet) + (6R)-10-formyltetrahydrofolate = N-formyl-L-methionyl-tRNA(fMet) + (6S)-5,6,7,8-tetrahydrofolate + H(+). In terms of biological role, attaches a formyl group to the free amino group of methionyl-tRNA(fMet). The formyl group appears to play a dual role in the initiator identity of N-formylmethionyl-tRNA by promoting its recognition by IF2 and preventing the misappropriation of this tRNA by the elongation apparatus. The sequence is that of Methionyl-tRNA formyltransferase from Brucella suis (strain ATCC 23445 / NCTC 10510).